The sequence spans 314 residues: Olfactory receptor 6C6 (314 aa).

Residues Met-1–Val-24 are Extracellular-facing. N-linked (GlcNAc...) asparagine glycosylation occurs at Asn-3. A helical membrane pass occupies residues Ile-25 to Ile-45. Residues Leu-46 to Asn-63 lie on the Cytoplasmic side of the membrane. Residues Phe-64–Val-84 traverse the membrane as a helical segment. Topologically, residues Thr-85–Cys-95 are extracellular. A disulfide bridge links Cys-95 with Cys-177. The chain crosses the membrane as a helical span at residues Ala-96 to Met-116. Residues Ser-117–Gln-141 lie on the Cytoplasmic side of the membrane. Residues Leu-142–Leu-162 traverse the membrane as a helical segment. At Lys-163 to Thr-199 the chain is on the extracellular side. Residues Leu-200–Ile-220 form a helical membrane-spanning segment. At Lys-221–Ser-237 the chain is on the cytoplasmic side. Residues Thr-238–Ile-258 traverse the membrane as a helical segment. Topologically, residues Lys-259 to Ser-269 are extracellular. Residues Lys-270–Leu-290 traverse the membrane as a helical segment. Residues Arg-291–Phe-314 lie on the Cytoplasmic side of the membrane.

Belongs to the G-protein coupled receptor 1 family.

Its subcellular location is the cell membrane. Its function is as follows. Odorant receptor. The protein is Olfactory receptor 6C6 (OR6C6) of Homo sapiens (Human).